We begin with the raw amino-acid sequence, 39 residues long: uncharacterized protein (39 aa).

This is an uncharacterized protein from Saccharomyces cerevisiae (strain ATCC 204508 / S288c) (Baker's yeast).